The sequence spans 872 residues: MKQLTSAQIRQMWLDFWKSKGHAVEPSANLVPVNDPTLLWINSGVATLKKYFDGSVIPENPRITNSQKAIRTNDIENVGKTARHHTMFEMLGNFSVGDYFRDEAIEWGYELLTSPEWFDLPKDKLYMTYYPDDKDSYNRWIACGVEPSHLIPIEDNFWEIGAGPSGPDTEIFFDRGEEFDPDNIGIRLLEEDIENDRYIEIWNIVLSQFNADPAVPRSEYKELPNKNIDTGAGLERLAAVMQGAKTNFETDLFMPIIREIEKMSGKAYDPDGETLSFKVIADHIRSLAFAIGDGALPGNEGRGYVLRRLLRRAVMHGRRLGISDAFLYKLVPTVGQIMESYYPEVLEKKDFIEKIVKREEETFARTIDAGSSMLDELLANLKKSGKDTLEGKDIFKLYDTYGFPVELTEELAEDEGFKIDHEGFKAAMKEQQDRARASVVKGGSMGMQNETLANITEPSEFLYEAETAESRLSVIVADDARHDSVNSGQALLVFEQTPFYAEMGGQVADHGTISDAAGTTVARVVDVQRAPNGQALHTVEVEGELVVGANYKLEIDHSRRHRVMKNHTATHLLHAALHNIVGNHAVQAGSLNEQEFLRFDFTHFEAVTPEELRAIEEQVNEEIWKATPVTTIETDIDTAKSMGAMALFGEKYGKRVRVVSIGDYSVELCGGTHVANTAEIGMFKIVKEEGIGSGTRRILAVTSREAYLAYREEEDALKSIAATLKAPQLKEVPNKVASLQEQLHALQKENATLKEKAAAAAAGDVFKDVKEANGVRYIASQVEVSDAGALRTFADQWKQADYSDVLVLAAHIREKVNVLVASKSENVHAGNLIKVLAPIVSGRGGGKPNMAMAGGSDANSIQDLLSAVAEQF.

Histidine 567, histidine 571, cysteine 669, and histidine 673 together coordinate Zn(2+).

It belongs to the class-II aminoacyl-tRNA synthetase family. Zn(2+) serves as cofactor.

Its subcellular location is the cytoplasm. The catalysed reaction is tRNA(Ala) + L-alanine + ATP = L-alanyl-tRNA(Ala) + AMP + diphosphate. Functionally, catalyzes the attachment of alanine to tRNA(Ala) in a two-step reaction: alanine is first activated by ATP to form Ala-AMP and then transferred to the acceptor end of tRNA(Ala). Also edits incorrectly charged Ser-tRNA(Ala) and Gly-tRNA(Ala) via its editing domain. The chain is Alanine--tRNA ligase from Streptococcus thermophilus (strain ATCC BAA-491 / LMD-9).